A 138-amino-acid polypeptide reads, in one-letter code: Putative nickel-responsive regulator (138 aa).

Ni(2+) contacts are provided by His78, His89, His91, and Cys97.

This sequence belongs to the transcriptional regulatory CopG/NikR family. It depends on Ni(2+) as a cofactor.

Its function is as follows. Transcriptional regulator. The chain is Putative nickel-responsive regulator from Thermococcus kodakarensis (strain ATCC BAA-918 / JCM 12380 / KOD1) (Pyrococcus kodakaraensis (strain KOD1)).